The primary structure comprises 441 residues: Chromosomal replication initiator protein DnaA (441 aa).

The interval 1–71 (MDIRWEEILE…AVYQVVGDRF (71 aa)) is domain I, interacts with DnaA modulators. Residues 71–99 (FKVSILTESETSSHVLKEVIQSKFDDSDS) form a domain II region. Positions 100 to 318 (DLNPEYIFSN…GIVNDLVMYK (219 aa)) are domain III, AAA+ region. ATP-binding residues include G143, G145, K146, and T147. Residues 319–441 (KAYEYFLLTE…HTIKHKISFQ (123 aa)) are domain IV, binds dsDNA.

It belongs to the DnaA family. Oligomerizes as a right-handed, spiral filament on DNA at oriC.

It is found in the cytoplasm. In terms of biological role, plays an essential role in the initiation and regulation of chromosomal replication. ATP-DnaA binds to the origin of replication (oriC) to initiate formation of the DNA replication initiation complex once per cell cycle. Binds the DnaA box (a 9 base pair repeat at the origin) and separates the double-stranded (ds)DNA. Forms a right-handed helical filament on oriC DNA; dsDNA binds to the exterior of the filament while single-stranded (ss)DNA is stabiized in the filament's interior. The ATP-DnaA-oriC complex binds and stabilizes one strand of the AT-rich DNA unwinding element (DUE), permitting loading of DNA polymerase. After initiation quickly degrades to an ADP-DnaA complex that is not apt for DNA replication. Binds acidic phospholipids. This Leptospira biflexa serovar Patoc (strain Patoc 1 / Ames) protein is Chromosomal replication initiator protein DnaA.